We begin with the raw amino-acid sequence, 115 residues long: Large ribosomal subunit protein uL18 (115 aa).

The interval 1–24 (MISKPDKNKLRQKRHTRVRGKISG) is disordered. Basic residues predominate over residues 10–20 (LRQKRHTRVRG).

Belongs to the universal ribosomal protein uL18 family. As to quaternary structure, part of the 50S ribosomal subunit; part of the 5S rRNA/L5/L18/L25 subcomplex. Contacts the 5S and 23S rRNAs.

In terms of biological role, this is one of the proteins that bind and probably mediate the attachment of the 5S RNA into the large ribosomal subunit, where it forms part of the central protuberance. This is Large ribosomal subunit protein uL18 from Lactococcus lactis subsp. cremoris (strain MG1363).